Here is a 130-residue protein sequence, read N- to C-terminus: uncharacterized protein (130 aa).

This is an uncharacterized protein from Sulfolobus islandicus filamentous virus (isolate Iceland/Hveragerdi) (SIFV).